A 540-amino-acid polypeptide reads, in one-letter code: 2-succinyl-5-enolpyruvyl-6-hydroxy-3-cyclohexene-1-carboxylate synthase (540 aa).

Belongs to the TPP enzyme family. MenD subfamily. As to quaternary structure, homodimer. Mg(2+) is required as a cofactor. It depends on Mn(2+) as a cofactor. Thiamine diphosphate serves as cofactor.

It catalyses the reaction isochorismate + 2-oxoglutarate + H(+) = 5-enolpyruvoyl-6-hydroxy-2-succinyl-cyclohex-3-ene-1-carboxylate + CO2. The protein operates within quinol/quinone metabolism; 1,4-dihydroxy-2-naphthoate biosynthesis; 1,4-dihydroxy-2-naphthoate from chorismate: step 2/7. It participates in quinol/quinone metabolism; menaquinone biosynthesis. Catalyzes the thiamine diphosphate-dependent decarboxylation of 2-oxoglutarate and the subsequent addition of the resulting succinic semialdehyde-thiamine pyrophosphate anion to isochorismate to yield 2-succinyl-5-enolpyruvyl-6-hydroxy-3-cyclohexene-1-carboxylate (SEPHCHC). This Mycobacteroides abscessus (strain ATCC 19977 / DSM 44196 / CCUG 20993 / CIP 104536 / JCM 13569 / NCTC 13031 / TMC 1543 / L948) (Mycobacterium abscessus) protein is 2-succinyl-5-enolpyruvyl-6-hydroxy-3-cyclohexene-1-carboxylate synthase.